We begin with the raw amino-acid sequence, 151 residues long: Lipoprotein signal peptidase (151 aa).

A run of 3 helical transmembrane segments spans residues 33–53, 58–78, and 87–107; these read VIPD…FGLL, WIFI…QFKI, and LTLG…LFIG. Catalysis depends on residues aspartate 111 and aspartate 126. The chain crosses the membrane as a helical span at residues 120–140; it reads FVFNFADSAIVVGVGLLMILM.

It belongs to the peptidase A8 family.

The protein resides in the cell membrane. The enzyme catalyses Release of signal peptides from bacterial membrane prolipoproteins. Hydrolyzes -Xaa-Yaa-Zaa-|-(S,diacylglyceryl)Cys-, in which Xaa is hydrophobic (preferably Leu), and Yaa (Ala or Ser) and Zaa (Gly or Ala) have small, neutral side chains.. It participates in protein modification; lipoprotein biosynthesis (signal peptide cleavage). In terms of biological role, this protein specifically catalyzes the removal of signal peptides from prolipoproteins. The protein is Lipoprotein signal peptidase of Desulfitobacterium hafniense (strain DSM 10664 / DCB-2).